The following is a 719-amino-acid chain: Probable disease resistance protein At4g14610 (719 aa).

A coiled-coil region spans residues 25–73 (SLPENLAALQKAIEVLKTKHDDVKRRVDKEEFLGRRHRLSQVQVEIERL). The region spanning 114–418 (EENLVAQVEE…NELEKILGCP (305 aa)) is the NB-ARC domain. 156-163 (GMGGVGKT) is an ATP binding site. LRR repeat units lie at residues 400–421 (AVRRMSLMKNELEKILGCPTCP), 422–444 (QLTTLLLQKNHKLVNISGEFFRF), and 447–469 (NLVVLDLSWNSSLTGLPKKISEV).

This sequence belongs to the disease resistance NB-LRR family.

Functionally, probable disease resistance protein. This is Probable disease resistance protein At4g14610 from Arabidopsis thaliana (Mouse-ear cress).